The sequence spans 30 residues: Cytochrome c oxidase subunit 5C (30 aa).

Residues 15-30 traverse the membrane as a helical segment; sequence VVKELVIXXXLGLXAG.

It belongs to the cytochrome c oxidase subunit 5C family.

It is found in the mitochondrion inner membrane. Functionally, this protein is one of the nuclear-coded polypeptide chains of cytochrome c oxidase, the terminal oxidase in mitochondrial electron transport. In Solanum tuberosum (Potato), this protein is Cytochrome c oxidase subunit 5C (COX5C).